The following is a 601-amino-acid chain: Glutamine--fructose-6-phosphate aminotransferase [isomerizing] (601 aa).

Residue C2 is the Nucleophile; for GATase activity of the active site. A Glutamine amidotransferase type-2 domain is found at 2 to 216 (CGIVGYIGTN…DKEIVIVTKD (215 aa)). SIS domains follow at residues 282–421 (ILDE…EIGD) and 453–591 (IAGE…VDKP). K596 acts as the For Fru-6P isomerization activity in catalysis.

In terms of assembly, homodimer.

Its subcellular location is the cytoplasm. It catalyses the reaction D-fructose 6-phosphate + L-glutamine = D-glucosamine 6-phosphate + L-glutamate. Catalyzes the first step in hexosamine metabolism, converting fructose-6P into glucosamine-6P using glutamine as a nitrogen source. This is Glutamine--fructose-6-phosphate aminotransferase [isomerizing] from Listeria innocua serovar 6a (strain ATCC BAA-680 / CLIP 11262).